The sequence spans 295 residues: Microcin B17-processing protein McbB (295 aa).

It localises to the cytoplasm. Its function is as follows. Necessary to process the inactive microcin B17 (McbA) precursor into the active peptide. The sequence is that of Microcin B17-processing protein McbB (mcbB) from Escherichia coli.